The chain runs to 669 residues: DNA ligase (669 aa).

NAD(+) is bound by residues 34–38 (DAEYD), 83–84 (SL), and Glu-113. Lys-115 acts as the N6-AMP-lysine intermediate in catalysis. The NAD(+) site is built by Arg-136, Glu-170, Lys-286, and Lys-310. Zn(2+) is bound by residues Cys-404, Cys-407, Cys-422, and Cys-427. Residues 591–669 (IADSPFAGKT…EEALVKAISH (79 aa)) form the BRCT domain.

Belongs to the NAD-dependent DNA ligase family. LigA subfamily. It depends on Mg(2+) as a cofactor. Mn(2+) serves as cofactor.

The enzyme catalyses NAD(+) + (deoxyribonucleotide)n-3'-hydroxyl + 5'-phospho-(deoxyribonucleotide)m = (deoxyribonucleotide)n+m + AMP + beta-nicotinamide D-nucleotide.. Functionally, DNA ligase that catalyzes the formation of phosphodiester linkages between 5'-phosphoryl and 3'-hydroxyl groups in double-stranded DNA using NAD as a coenzyme and as the energy source for the reaction. It is essential for DNA replication and repair of damaged DNA. This Halalkalibacterium halodurans (strain ATCC BAA-125 / DSM 18197 / FERM 7344 / JCM 9153 / C-125) (Bacillus halodurans) protein is DNA ligase.